The chain runs to 159 residues: D-aminoacyl-tRNA deacylase (159 aa).

Positions 142–143 (GP) match the Gly-cisPro motif, important for rejection of L-amino acids motif.

This sequence belongs to the DTD family. Homodimer.

It is found in the cytoplasm. The catalysed reaction is glycyl-tRNA(Ala) + H2O = tRNA(Ala) + glycine + H(+). It carries out the reaction a D-aminoacyl-tRNA + H2O = a tRNA + a D-alpha-amino acid + H(+). Its function is as follows. An aminoacyl-tRNA editing enzyme that deacylates mischarged D-aminoacyl-tRNAs. Also deacylates mischarged glycyl-tRNA(Ala), protecting cells against glycine mischarging by AlaRS. Acts via tRNA-based rather than protein-based catalysis; rejects L-amino acids rather than detecting D-amino acids in the active site. By recycling D-aminoacyl-tRNA to D-amino acids and free tRNA molecules, this enzyme counteracts the toxicity associated with the formation of D-aminoacyl-tRNA entities in vivo and helps enforce protein L-homochirality. This chain is D-aminoacyl-tRNA deacylase, found in Albidiferax ferrireducens (strain ATCC BAA-621 / DSM 15236 / T118) (Rhodoferax ferrireducens).